We begin with the raw amino-acid sequence, 197 residues long: 3-isopropylmalate dehydratase small subunit (197 aa).

Belongs to the LeuD family. LeuD type 1 subfamily. Heterodimer of LeuC and LeuD.

It carries out the reaction (2R,3S)-3-isopropylmalate = (2S)-2-isopropylmalate. The protein operates within amino-acid biosynthesis; L-leucine biosynthesis; L-leucine from 3-methyl-2-oxobutanoate: step 2/4. Catalyzes the isomerization between 2-isopropylmalate and 3-isopropylmalate, via the formation of 2-isopropylmaleate. This chain is 3-isopropylmalate dehydratase small subunit, found in Mycolicibacterium vanbaalenii (strain DSM 7251 / JCM 13017 / BCRC 16820 / KCTC 9966 / NRRL B-24157 / PYR-1) (Mycobacterium vanbaalenii).